We begin with the raw amino-acid sequence, 265 residues long: NADH-ubiquinone oxidoreductase chain 5 (265 aa).

Transmembrane regions (helical) follow at residues 10 to 30 (ISFY…LKFL), 50 to 70 (IVMT…VLLI), 92 to 112 (ILLV…PNLI), 113 to 133 (SILL…IYFQ), 153 to 173 (VALL…YIFY), 183 to 203 (MMII…QIPF), 215 to 235 (TPVS…YLLI), and 244 to 264 (WWMA…AGLG).

The protein belongs to the complex I subunit 5 family.

Its subcellular location is the mitochondrion inner membrane. It carries out the reaction a ubiquinone + NADH + 5 H(+)(in) = a ubiquinol + NAD(+) + 4 H(+)(out). Core subunit of the mitochondrial membrane respiratory chain NADH dehydrogenase (Complex I) that is believed to belong to the minimal assembly required for catalysis. Complex I functions in the transfer of electrons from NADH to the respiratory chain. The immediate electron acceptor for the enzyme is believed to be ubiquinone. The protein is NADH-ubiquinone oxidoreductase chain 5 (ND5) of Anopheles quadriannulatus (Mosquito).